The following is a 445-amino-acid chain: Tubby-like F-box protein 8 (445 aa).

One can recognise an F-box domain in the interval 56–102; that stretch reads ESRWASLPPELLRDVIRRLEASESTWPSRKDVVSCAAVCKAWREMCK.

Belongs to the TUB family. Ubiquitous.

The chain is Tubby-like F-box protein 8 (TULP8) from Oryza sativa subsp. japonica (Rice).